The sequence spans 353 residues: L-tryptophan dehydrogenase (353 aa).

Residue arginine 44 participates in NAD(+) binding. Lysine 80 serves as the catalytic Proton donor/acceptor. Residues aspartate 114, threonine 146, 176–181, lysine 204, and 255–257 contribute to the NAD(+) site; these read GLGNVG and AAN.

It belongs to the Glu/Leu/Phe/Val dehydrogenases family. In terms of assembly, homodimer.

The enzyme catalyses L-tryptophan + NAD(+) + H2O = indole-3-pyruvate + NH4(+) + NADH + H(+). Catalyzes the reversible oxidative deamination of L-tryptophan to indole-3-pyruvate in the presence of NAD(+). Cannot use other L-amino acids and D-Trp. Involved in the biosynthesis of scytonemin, a cyanobacterial radiation-absorbing pigment. The sequence is that of L-tryptophan dehydrogenase from Nostoc punctiforme (strain ATCC 29133 / PCC 73102).